We begin with the raw amino-acid sequence, 159 residues long: Ribosomal RNA large subunit methyltransferase H (159 aa).

Residues leucine 76, glycine 108, and 127–132 (FSKMTF) contribute to the S-adenosyl-L-methionine site.

This sequence belongs to the RNA methyltransferase RlmH family. In terms of assembly, homodimer.

It is found in the cytoplasm. It catalyses the reaction pseudouridine(1915) in 23S rRNA + S-adenosyl-L-methionine = N(3)-methylpseudouridine(1915) in 23S rRNA + S-adenosyl-L-homocysteine + H(+). Its function is as follows. Specifically methylates the pseudouridine at position 1915 (m3Psi1915) in 23S rRNA. This is Ribosomal RNA large subunit methyltransferase H from Bifidobacterium longum subsp. infantis (strain ATCC 15697 / DSM 20088 / JCM 1222 / NCTC 11817 / S12).